The sequence spans 379 residues: MQSFLTLLKEHEDTCAPPAELVTLAGRLCRDFQDDLAQLQPLVTAILDSQLRLHLLDNADVALACARVLDQQEQQQAACRLLEGCQVPGGSQELVQLWNDIHYRLVMRRLGVAALTPVQKFRCRKRNPPPPSLCPEGLKSRNFPREVREKLHNFAVGVNTNPSKAERENLALETSLTPEQVYNWFANYRRRQRALPQHMKPAQQATAEDPGARERGPDLLQPSGNPRVDSGFVDRPQWSEEREEKGPPQSPQTTQGPWEPLALAPDFPADETVSKPLDVSGHPQSVQLEEGLGTSSGRTELRVGSFLVTQPPLQAPEFILTQSPPELAPAPSAFPGPVSAMELSQALPSSQVQCSDSQASGDAFWGARMLLEFSGSSLG.

Positions 135–196 form a DNA-binding region, homeobox; that stretch reads PEGLKSRNFP…NYRRRQRALP (62 aa). The segment at 195–283 is disordered; that stretch reads LPQHMKPAQQ…SKPLDVSGHP (89 aa). Positions 237 to 246 are enriched in basic and acidic residues; the sequence is QWSEEREEKG.

The protein resides in the nucleus. This chain is Anomalous homeobox protein (ANHX), found in Homo sapiens (Human).